Reading from the N-terminus, the 499-residue chain is Glutelin type-B 1 (499 aa).

The first 24 residues, 1-24 (MASSVFSRFSIYFCVLLLCHGSMA), serve as a signal peptide directing secretion. Intrachain disulfides connect Cys-45-Cys-78 and Cys-121-Cys-309. 2 Cupin type-1 domains span residues 50–247 (LQAF…VAAK) and 315–464 (VNIE…EQAR). Positions 467-499 (KNNRGEEHGAFTPRFQQQYYPGLSNESESETSE) are disordered.

The protein belongs to the 11S seed storage protein (globulins) family. As to quaternary structure, hexamer; each subunit is composed of an acidic and a basic chain derived from a single precursor and linked by a disulfide bond.

Seed storage protein. The protein is Glutelin type-B 1 (GluB1-A) of Oryza sativa subsp. japonica (Rice).